We begin with the raw amino-acid sequence, 886 residues long: DNA double-strand break repair Rad50 ATPase (886 aa).

ATP contacts are provided by residues R13, 33 to 39, and Q128; that span reads NGAGKSS. Coiled-coil stretches lie at residues 183-360 and 400-433; these read EQIK…LLET and KEITEKLKKLIAKKSSLKTRGAQLKKAVEELKSA. Residues 392-489 enclose the Zinc-hook domain; sequence LSKAKEEEKE…RLEKVEKALE (98 aa). Zn(2+)-binding residues include C437 and C440. Coiled coils occupy residues 489–518 and 545–713; these read EKQETVLKYRQMVDELKALENELSSHDAEK and SSAS…KKVE. 792–797 serves as a coordination point for ATP; that stretch reads FLSGGE.

The protein belongs to the SMC family. RAD50 subfamily. As to quaternary structure, homodimer. Forms a heterotetramer composed of two Mre11 subunits and two Rad50 subunits. Zn(2+) is required as a cofactor.

Part of the Rad50/Mre11 complex, which is involved in the early steps of DNA double-strand break (DSB) repair. The complex may facilitate opening of the processed DNA ends to aid in the recruitment of HerA and NurA. Rad50 controls the balance between DNA end bridging and DNA resection via ATP-dependent structural rearrangements of the Rad50/Mre11 complex. This is DNA double-strand break repair Rad50 ATPase from Archaeoglobus fulgidus (strain ATCC 49558 / DSM 4304 / JCM 9628 / NBRC 100126 / VC-16).